Here is an 85-residue protein sequence, read N- to C-terminus: Translation initiation factor IF-1 1 (85 aa).

Residues 1–72 (MSKEDLIEMQ…NKGRLTFRHI (72 aa)) enclose the S1-like domain.

This sequence belongs to the IF-1 family. Component of the 30S ribosomal translation pre-initiation complex which assembles on the 30S ribosome in the order IF-2 and IF-3, IF-1 and N-formylmethionyl-tRNA(fMet); mRNA recruitment can occur at any time during PIC assembly.

The protein localises to the cytoplasm. One of the essential components for the initiation of protein synthesis. Stabilizes the binding of IF-2 and IF-3 on the 30S subunit to which N-formylmethionyl-tRNA(fMet) subsequently binds. Helps modulate mRNA selection, yielding the 30S pre-initiation complex (PIC). Upon addition of the 50S ribosomal subunit IF-1, IF-2 and IF-3 are released leaving the mature 70S translation initiation complex. The protein is Translation initiation factor IF-1 1 of Paracidovorax citrulli (strain AAC00-1) (Acidovorax citrulli).